Consider the following 505-residue polypeptide: Alpha-ketoglutarate-dependent dioxygenase FTO (505 aa).

A Phosphothreonine modification is found at Thr-4. Residues 32–327 (TPKDDEFYQQ…SSTHRVAECS (296 aa)) form a fe2OG dioxygenase domain region. Residues Arg-96 and Tyr-108 each contribute to the substrate site. Position 205 (Asn-205) interacts with 2-oxoglutarate. A loop L1; predicted to block binding of double-stranded DNA or RNA region spans residues 213 to 224 (PYLKEEPYFGMG). An N6-acetyllysine modification is found at Lys-216. Residues His-231 and Asp-233 each coordinate Fe cation. 231-234 (HHDE) is a binding site for substrate. Tyr-295 provides a ligand contact to 2-oxoglutarate. Residue His-307 participates in Fe cation binding. Residues 316–318 (RFS), Thr-320, and Arg-322 contribute to the 2-oxoglutarate site.

It belongs to the fto family. In terms of assembly, monomer. May also exist as homodimer. The cofactor is Fe(2+).

Its subcellular location is the nucleus. The protein resides in the nucleus speckle. The protein localises to the cytoplasm. The catalysed reaction is a 5'-end (N(7)-methyl 5'-triphosphoguanosine)-(N(6),2'-O-dimethyladenosine) in mRNA + 2-oxoglutarate + O2 = a 5'-end (N(7)-methyl 5'-triphosphoguanosine)-(2'-O-methyladenosine) in mRNA + formaldehyde + succinate + CO2. It carries out the reaction an N(6)-methyladenosine in mRNA + 2-oxoglutarate + O2 = an adenosine in mRNA + formaldehyde + succinate + CO2. The enzyme catalyses N(6)-methyladenosine in U6 snRNA + 2-oxoglutarate + O2 = adenosine in U6 snRNA + formaldehyde + succinate + CO2. It catalyses the reaction a 5'-end (N(7)-methyl 5'-triphosphoguanosine)-(N(6),2'-O-dimethyladenosine) in U6 snRNA + 2-oxoglutarate + O2 = a 5'-end (N(7)-methyl 5'-triphosphoguanosine)-(2'-O-methyladenosine) in U6 snRNA + formaldehyde + succinate + CO2. The catalysed reaction is an N(1)-methyladenosine in tRNA + 2-oxoglutarate + O2 = an adenosine in tRNA + formaldehyde + succinate + CO2. Activated by ascorbate. Inhibited by N-oxalylglycine, fumarate and succinate. Its function is as follows. RNA demethylase that mediates oxidative demethylation of different RNA species, such as mRNAs, tRNAs and snRNAs, and acts as a regulator of fat mass, adipogenesis and energy homeostasis. Specifically demethylates N(6)-methyladenosine (m6A) RNA, the most prevalent internal modification of messenger RNA (mRNA) in higher eukaryotes. M6A demethylation by FTO affects mRNA expression and stability. Also able to demethylate m6A in U6 small nuclear RNA (snRNA). Mediates demethylation of N(6),2'-O-dimethyladenosine cap (m6A(m)), by demethylating the N(6)-methyladenosine at the second transcribed position of mRNAs and U6 snRNA. Demethylation of m6A(m) in the 5'-cap by FTO affects mRNA stability by promoting susceptibility to decapping. Also acts as a tRNA demethylase by removing N(1)-methyladenine from various tRNAs. Has no activity towards 1-methylguanine. Has no detectable activity towards double-stranded DNA. Also able to repair alkylated DNA and RNA by oxidative demethylation: demethylates single-stranded RNA containing 3-methyluracil, single-stranded DNA containing 3-methylthymine and has low demethylase activity towards single-stranded DNA containing 1-methyladenine or 3-methylcytosine. Ability to repair alkylated DNA and RNA is however unsure in vivo. Involved in the regulation of fat mass, adipogenesis and body weight, thereby contributing to the regulation of body size and body fat accumulation. Involved in the regulation of thermogenesis and the control of adipocyte differentiation into brown or white fat cells. Regulates activity of the dopaminergic midbrain circuitry via its ability to demethylate m6A in mRNAs. In Pongo abelii (Sumatran orangutan), this protein is Alpha-ketoglutarate-dependent dioxygenase FTO.